The sequence spans 409 residues: uncharacterized protein (409 aa).

A run of 10 helical transmembrane segments spans residues 22-42 (ILIIIGICHMLNDSLQAVIPA), 58-78 (LGIIAFTLNMVSSVMQPVVGW), 99-119 (GILGLAFAPSFITILCCVFFI), 174-194 (FGAVWFTLVAALAVMFLMYIA), 217-237 (NTAITKSVVSALIIIIFLIFA), 266-286 (SYIFVFLLFGAIGTFLGGPLA), 293-312 (FVILGSLLCSAPLAIVLPFA), 316-338 (LAYGVLALIGLVLMSSFSVTVVY), 353-373 (LTVGLAFGMGAIGAVALGALI), and 378-398 (LTPTMIAIAFLPVLGILAFLL).

This sequence belongs to the major facilitator superfamily.

It is found in the cell membrane. This is an uncharacterized protein from Bacillus subtilis (strain 168).